The sequence spans 301 residues: Tegument protein VP22 (301 aa).

Residues 1-171 (MTSRRSVKSG…PTRSKTPAQG (171 aa)) form a disordered region. Residues 113–124 (RTPTTAPRAPRT) are compositionally biased toward low complexity. The short motif at 163 to 166 (TRSK) is the Nuclear localization signal element. The segment at 174–267 (RKLHFSTAPP…LVNPDVVQDV (94 aa)) is interaction with gE. Residues 232–244 (LNELLGITTIRVT) carry the Nuclear export signal motif. The segment covering 269–281 (AATATRGRSAASR) has biased composition (low complexity). Positions 269 to 301 (AATATRGRSAASRPTERPRAPARSASRPRRPVE) are disordered.

It belongs to the alphaherpesvirinae VP22 tegument protein family. Interacts with gE (via C-terminus); this interaction is necessary for the recruitment of VP22 to the Golgi and its packaging into virions. Interacts with gM (via C-terminus). Interacts with VP16; this interaction allows the formation of a tripartite complex composed of VP16, VP22 and UL41/VHS. According to a report interacts with gD (via C-terminus). According another publication, does not interact with gD. Interacts with host CGAS. Interacts with host SET; this interaction may interfere with SET-mediated nucleosomal deposition onto the viral genome. Interacts with the capsid-binding protein UL16. In terms of processing, highly phosphorylated in the host cell. Packaging is selective for underphosphorylated forms.

The protein localises to the virion tegument. It localises to the host cytoplasm. The protein resides in the host nucleus. It is found in the host Golgi apparatus. Tegument protein that plays different roles during the time course of infection. Participates in both the accumulation of viral mRNAs and viral protein translation at late time of infection. Modulates the RNase activity of the virion host shutoff protein UL41 probably to ensure necessary levels of key cellular mRNAs and proteins. Plays a role in microtubule reorganization that occurs after viral infection by stabilizing microtubule network. Finally, may prevent nucleosomal deposition onto the viral genome by interacting with and inhibiting host SET. Plays a role in the inhibition of host innate immune system by targeting the CGAS enzymatic activity which is the principal cytosolic DNA sensor that detects invading viral DNA. Acts by mediating disruption of liquid-like droplets in which CGAS is activated, thereby preventing CGAS activity. The chain is Tegument protein VP22 from Human herpesvirus 1 (strain 17) (HHV-1).